A 2726-amino-acid chain; its full sequence is Filamin-C (2726 aa).

Residues 1–260 (MMNNSNYSDA…VMTYLSQFPK (260 aa)) are actin-binding. Ser5 carries the post-translational modification Phosphoserine. Calponin-homology (CH) domains follow at residues 37 to 143 (KIQQ…LHYS) and 160 to 263 (QTPK…KAKL). Filamin repeat units follow at residues 271–369 (SKQL…EVNV), 371–469 (MALG…PVHV), 470–566 (AEAC…EVQV), 567–659 (SPEA…IAHI), 663–759 (PPDC…RVNV), 760–862 (GEGS…HIKV), 863–961 (DPSH…VVNV), 962–1057 (APPL…AVEG), 1058–1150 (VLPP…KATI), 1151–1245 (QPVF…RVHV), 1246–1345 (QPAV…RVGV), 1346–1438 (TEGC…RVPV), 1439–1534 (KDVV…KIKV), 1535–1631 (LPAH…RIHA), and 1636–1735 (DASK…HVLA). Position 1003 is an omega-N-methylarginine (Arg1003). Phosphoserine is present on residues Ser1162 and Ser1339. A hinge 1 region spans residues 1736-1759 (CDPLPHVEEPAEVLQLHQPYAPLR). Filamin repeat units lie at residues 1760-1854 (PGTC…LQFY), 1855-1947 (VDAI…TAKI), 1948-2034 (TGDD…KILV), and 2037-2129 (SEIG…TVKV). Ser2043 is modified (phosphoserine). An intradomain insert; mediate targeting to Z lines region spans residues 2163 to 2244 (GNWFQMVSAQ…FGSITRQQEG (82 aa)). A compositionally biased stretch (basic and acidic residues) spans 2194–2210 (ISKTRGGETKREVRVEE). Residues 2194–2214 (ISKTRGGETKREVRVEESTQV) form a disordered region. Phosphoserine is present on residues Ser2234 and Ser2237. Thr2239 bears the Phosphothreonine mark. Polar residues predominate over residues 2241–2260 (QQEGEASSQDMTAQVTSPSG). The interval 2241 to 2261 (QQEGEASSQDMTAQVTSPSGK) is disordered. The Filamin 20; mediates interaction with XIRP1 repeat unit spans residues 2245–2307 (EASSQDMTAQ…VPGSPFQFTV (63 aa)). Filamin repeat units lie at residues 2310–2402 (LGEG…VVPV), 2404–2497 (SLSD…KIRV), and 2501–2593 (SQAG…KAKV). An interaction with INPPL1 region spans residues 2404–2725 (SLSDDARRLT…VPGSPFKVNV (322 aa)). Phosphoserine is present on residues Ser2587, Ser2618, Ser2621, Ser2633, Ser2715, and Ser2719. The tract at residues 2594-2630 (TGPRLSGGHSLHETSTVLVETVTKSSSSRGASYSSIP) is hinge 2. Positions 2594 to 2726 (TGPRLSGGHS…PGSPFKVNVP (133 aa)) are self-association site, tail. One copy of the Filamin 24 repeat lies at 2631 to 2725 (KFSSDASKVV…VPGSPFKVNV (95 aa)).

This sequence belongs to the filamin family. In terms of assembly, homodimer; the filamin repeat 24 and the second hinge domain are important for dimer formation. Interacts with FLNB, KCND2, INPPL1, ITGB1A, MYOT, MYOZ1 and MYOZ3. Interacts with sarcoglycans SGCD and SGCG. Interacts (via filament repeats 17-18, 20-21 and 24) with USP25 (isoform USP25m only). Interacts with FBLIM1. Interacts with KY. Interacts with IGFN1. Interacts with MICALL2. Interacts with XIRP1; this interaction is mediated by filamin 20 repeat. Interacts with ANK3. Interacts with SYNPO2. In terms of processing, ubiquitinated by FBXL22, leading to proteasomal degradation.

The protein resides in the cytoplasm. It localises to the membrane. It is found in the cytoskeleton. The protein localises to the myofibril. Its subcellular location is the sarcomere. The protein resides in the z line. Functionally, muscle-specific filamin, which plays a central role in sarcomere assembly and organization. Critical for normal myogenesis, it probably functions as a large actin-cross-linking protein with structural functions at the Z lines in muscle cells. May be involved in reorganizing the actin cytoskeleton in response to signaling events. The chain is Filamin-C (Flnc) from Rattus norvegicus (Rat).